Reading from the N-terminus, the 345-residue chain is Ferrochelatase (345 aa).

Residues histidine 215 and glutamate 296 each coordinate Fe cation.

The protein belongs to the ferrochelatase family.

The protein resides in the cytoplasm. The catalysed reaction is heme b + 2 H(+) = protoporphyrin IX + Fe(2+). It functions in the pathway porphyrin-containing compound metabolism; protoheme biosynthesis; protoheme from protoporphyrin-IX: step 1/1. Its function is as follows. Catalyzes the ferrous insertion into protoporphyrin IX. This Rhodopseudomonas palustris (strain HaA2) protein is Ferrochelatase.